We begin with the raw amino-acid sequence, 189 residues long: Pyridoxal 5'-phosphate synthase subunit PdxT (189 aa).

47-49 (GES) is a binding site for L-glutamine. The active-site Nucleophile is C79. L-glutamine is bound by residues R106 and 135–136 (IR). Residues H171 and E173 each act as charge relay system in the active site.

This sequence belongs to the glutaminase PdxT/SNO family. In terms of assembly, in the presence of PdxS, forms a dodecamer of heterodimers. Only shows activity in the heterodimer.

The catalysed reaction is aldehydo-D-ribose 5-phosphate + D-glyceraldehyde 3-phosphate + L-glutamine = pyridoxal 5'-phosphate + L-glutamate + phosphate + 3 H2O + H(+). It carries out the reaction L-glutamine + H2O = L-glutamate + NH4(+). It functions in the pathway cofactor biosynthesis; pyridoxal 5'-phosphate biosynthesis. Functionally, catalyzes the hydrolysis of glutamine to glutamate and ammonia as part of the biosynthesis of pyridoxal 5'-phosphate. The resulting ammonia molecule is channeled to the active site of PdxS. In Thermoanaerobacter pseudethanolicus (strain ATCC 33223 / 39E) (Clostridium thermohydrosulfuricum), this protein is Pyridoxal 5'-phosphate synthase subunit PdxT.